Here is a 321-residue protein sequence, read N- to C-terminus: Probable cell division protein WhiA (321 aa).

The segment at residues 275 to 308 is a DNA-binding region (H-T-H motif); that stretch reads SLDELGRLADPPMTKDAVAGRIRRLLAMADKRAA.

The protein belongs to the WhiA family.

Its function is as follows. Involved in cell division and chromosome segregation. This chain is Probable cell division protein WhiA, found in Micrococcus luteus (strain ATCC 4698 / DSM 20030 / JCM 1464 / CCM 169 / CCUG 5858 / IAM 1056 / NBRC 3333 / NCIMB 9278 / NCTC 2665 / VKM Ac-2230) (Micrococcus lysodeikticus).